The sequence spans 453 residues: Armadillo repeat-containing X-linked protein 1 (453 aa).

Residues 1-6 lie on the Mitochondrial intermembrane side of the membrane; the sequence is MGRTRE. Mitochondrion outer membrane (MOM)-targeting sequence stretches follow at residues 1–6 and 26–36; these read MGRTRE and RLAWGRDENEK. The chain crosses the membrane as a helical; Signal-anchor span at residues 7–29; the sequence is AGCVAAGVVIGAGACYCVYRLAW. Residues 30 to 453 lie on the Cytoplasmic side of the membrane; sequence GRDENEKIWD…VKVLKVLTKL (424 aa). The disordered stretch occupies residues 140-182; sequence PSLPCPGGRGGGCHPTRSGSRAGGRASGKSKGKARSKSTRAPA. Positions 167 to 177 are enriched in basic residues; it reads GKSKGKARSKS. ARM repeat units follow at residues 195–235, 237–276, 358–398, and 415–453; these read PYKI…NNAA, SFNQ…NLSV, PAMT…NIND, and SSLF…LTKL.

The protein belongs to the eutherian X-chromosome-specific Armcx family. Interacts with MIRO1.

It localises to the mitochondrion. The protein localises to the mitochondrion outer membrane. Its function is as follows. Regulates mitochondrial transport during axon regeneration. Increases the proportion of motile mitochondria by recruiting stationary mitochondria into the motile pool. Enhances mitochondria movement and neurite growth in both adult axons and embryonic neurons. Promotes neuronal survival and axon regeneration after nerve injury. May link mitochondria to the Trak1-kinesin motor complex via its interaction with MIRO1. This is Armadillo repeat-containing X-linked protein 1 (ARMCX1) from Pongo abelii (Sumatran orangutan).